Consider the following 276-residue polypeptide: 4-hydroxy-tetrahydrodipicolinate reductase (276 aa).

16-21 (GALGKM) provides a ligand contact to NAD(+). Lys-44 lines the NADP(+) pocket. Residues 109–111 (GTT) and 135–138 (APNF) each bind NAD(+). Catalysis depends on His-165, which acts as the Proton donor/acceptor. Residue His-166 participates in (S)-2,3,4,5-tetrahydrodipicolinate binding. The active-site Proton donor is Lys-169. 175-176 (GT) is a binding site for (S)-2,3,4,5-tetrahydrodipicolinate.

This sequence belongs to the DapB family.

Its subcellular location is the cytoplasm. It carries out the reaction (S)-2,3,4,5-tetrahydrodipicolinate + NAD(+) + H2O = (2S,4S)-4-hydroxy-2,3,4,5-tetrahydrodipicolinate + NADH + H(+). The catalysed reaction is (S)-2,3,4,5-tetrahydrodipicolinate + NADP(+) + H2O = (2S,4S)-4-hydroxy-2,3,4,5-tetrahydrodipicolinate + NADPH + H(+). It functions in the pathway amino-acid biosynthesis; L-lysine biosynthesis via DAP pathway; (S)-tetrahydrodipicolinate from L-aspartate: step 4/4. Catalyzes the conversion of 4-hydroxy-tetrahydrodipicolinate (HTPA) to tetrahydrodipicolinate. This is 4-hydroxy-tetrahydrodipicolinate reductase from Thermosynechococcus vestitus (strain NIES-2133 / IAM M-273 / BP-1).